Consider the following 205-residue polypeptide: Small ribosomal subunit protein uS4 (205 aa).

The disordered stretch occupies residues 20 to 44 (WGRPKSPVNRREYGPGQHGQRRKGK). Residues 94–154 (SRLDAIVYRS…ERSKQLLLVL (61 aa)) enclose the S4 RNA-binding domain.

The protein belongs to the universal ribosomal protein uS4 family. As to quaternary structure, part of the 30S ribosomal subunit. Contacts protein S5. The interaction surface between S4 and S5 is involved in control of translational fidelity.

Its function is as follows. One of the primary rRNA binding proteins, it binds directly to 16S rRNA where it nucleates assembly of the body of the 30S subunit. Functionally, with S5 and S12 plays an important role in translational accuracy. The polypeptide is Small ribosomal subunit protein uS4 (Bartonella bacilliformis (strain ATCC 35685 / KC583 / Herrer 020/F12,63)).